Consider the following 146-residue polypeptide: Angiogenin (146 aa).

The N-terminal stretch at methionine 1 to alanine 24 is a signal peptide. Pyrrolidone carboxylic acid is present on glutamine 25. Histidine 37 acts as the Proton acceptor in catalysis. Position 45 (arginine 45) interacts with tRNA. 3 disulfides stabilise this stretch: cysteine 50–cysteine 105, cysteine 63–cysteine 116, and cysteine 81–cysteine 131. The Nucleolar localization signal signature appears at arginine 55–methionine 59. Residues cysteine 105 and isoleucine 127 each contribute to the tRNA site. The active-site Proton donor is histidine 138.

Belongs to the pancreatic ribonuclease family. As to quaternary structure, homodimer. Interacts with RNH1; inhibiting ANG ribonuclease activity. Interacts with PCNA.

It localises to the secreted. The protein localises to the nucleus. It is found in the nucleolus. The protein resides in the cytoplasm. Its subcellular location is the stress granule. Its activity is regulated as follows. Has weak tRNA ribonuclease activity by itself due to partial autoinhibition by its C-terminus, which folds into a short alpha-helix that partially occludes the substrate-binding site. In absence of stress, the ribonuclease activity is inhibited by RNH1 in the cytoplasm. In response to stress, dissociates from RNH1 in the cytoplasm and associates with cytoplasmic ribosomes with vacant A-sites: ribosomes directly activate the tRNA ribonuclease activity of ANG by refolding the C-terminal alpha-helix. In response to stress, the angiogenic activity of ANG is inhibited by RNH1 in the nucleus. Its function is as follows. Secreted ribonuclease that can either promote or restrict cell proliferation of target cells, depending on the context. Endocytosed in target cells via its receptor PLXNB2 and translocates to the cytoplasm or nucleus. Under stress conditions, localizes to the cytoplasm and promotes the assembly of stress granules (SGs): specifically cleaves a subset of tRNAs within anticodon loops to produce tRNA-derived stress-induced fragments (tiRNAs), resulting in translation repression and inhibition of cell proliferation. tiRNas also prevent formation of apoptosome, thereby promoting cell survival. Preferentially cleaves RNAs between a pyrimidine and an adenosine residue, suggesting that it cleaves the anticodon loop of tRNA(Ala) (32-UUAGCAU-38) after positions 33 and 36. Cleaves a subset of tRNAs, including tRNA(Ala), tRNA(Glu), tRNA(Gly), tRNA(Lys), tRNA(Val), tRNA(His), tRNA(Asp) and tRNA(Sec). Under growth conditions and in differentiated cells, translocates to the nucleus and stimulates ribosomal RNA (rRNA) transcription, including that containing the initiation site sequences of 45S rRNA, thereby promoting cell growth and proliferation. Angiogenin induces vascularization of normal and malignant tissues via its ability to promote rRNA transcription. Involved in hematopoietic stem and progenitor cell (HSPC) growth and survival by promoting rRNA transcription in growth conditions and inhibiting translation in response to stress, respectively. Mediates the crosstalk between myeloid and intestinal epithelial cells to protect the intestinal epithelial barrier integrity: secreted by myeloid cells and promotes intestinal epithelial cells proliferation and survival. Also mediates osteoclast-endothelial cell crosstalk in growing bone: produced by osteoclasts and protects the neighboring vascular cells against senescence by promoting rRNA transcription. The chain is Angiogenin (ANG) from Miopithecus talapoin (Angolan talapoin).